The sequence spans 151 residues: Transcriptional repressor NrdR (151 aa).

A zinc finger spans residues 3–34 (CPFCHNDQSRVIDSRVIDSGSAIRRRRECTQC). The 91-residue stretch at 46 to 136 (LLVVKRNGLT…VYKSFESADD (91 aa)) folds into the ATP-cone domain.

This sequence belongs to the NrdR family. It depends on Zn(2+) as a cofactor.

In terms of biological role, negatively regulates transcription of bacterial ribonucleotide reductase nrd genes and operons by binding to NrdR-boxes. This is Transcriptional repressor NrdR from Corynebacterium diphtheriae (strain ATCC 700971 / NCTC 13129 / Biotype gravis).